The sequence spans 176 residues: Ribosome rescue factor SmrB (176 aa).

Residues leucine 97–serine 172 form the Smr domain.

This sequence belongs to the SmrB family. Associates with collided ribosomes, but not with correctly translating polysomes.

Functionally, acts as a ribosome collision sensor. Detects stalled/collided disomes (pairs of ribosomes where the leading ribosome is stalled and a second ribosome has collided with it) and endonucleolytically cleaves mRNA at the 5' boundary of the stalled ribosome. Stalled/collided disomes form a new interface (primarily via the 30S subunits) that binds SmrB. Cleaved mRNA becomes available for tmRNA ligation, leading to ribosomal subunit dissociation and rescue of stalled ribosomes. This Vibrio vulnificus (strain YJ016) protein is Ribosome rescue factor SmrB.